Consider the following 339-residue polypeptide: Geranylgeranyl pyrophosphate synthase AN1592 (339 aa).

Positions 41, 44, and 73 each coordinate isopentenyl diphosphate. Residues aspartate 80 and aspartate 84 each contribute to the Mg(2+) site. Arginine 89 is a binding site for dimethylallyl diphosphate. Arginine 90 is a binding site for isopentenyl diphosphate. Residues lysine 192, threonine 193, and glutamine 228 each coordinate dimethylallyl diphosphate. A Mg(2+)-binding site is contributed by aspartate 231. Positions 235, 245, and 255 each coordinate dimethylallyl diphosphate.

The protein belongs to the FPP/GGPP synthase family. It depends on Mg(2+) as a cofactor.

The catalysed reaction is isopentenyl diphosphate + dimethylallyl diphosphate = (2E)-geranyl diphosphate + diphosphate. It catalyses the reaction isopentenyl diphosphate + (2E)-geranyl diphosphate = (2E,6E)-farnesyl diphosphate + diphosphate. The enzyme catalyses isopentenyl diphosphate + (2E,6E)-farnesyl diphosphate = (2E,6E,10E)-geranylgeranyl diphosphate + diphosphate. Its pathway is secondary metabolite biosynthesis. Its function is as follows. Geranylgeranyl pyrophosphate synthase; part of the gene cluster that mediates the biosynthesis of erinacines, cyathane-xylosides that show unique biological activities, including leishmanicidal activity, stimulating activity for nerve growth-factor synthesis, and agonistic activity toward the kappa opioid receptor. The geranylgeranyl diphosphate (GGPP) synthase eriE catalyzes the first step in erinacines biosynthesis via conversion of farnesyl pyrophosphate and isopentyl pyrophosphate into geranylgeranyl pyrophosphate (GGPP). GGPP is then substrate of the diterpene cyclase eriG for the production of cyatha-3,12-diene. The cytochrome P450 monooxygenase eriI then hydroxylates cyatha-3,12-diene at C-14 of the seven-membered ring to produce erinacol, which is further hydroxylated at C-15 by the cytochrome P450 monooxygenase eriC to yield cyathadiol. The cytochrome P450 monooxygenase eriA then catalyzes C-11 hydroxylation in the presence of the short chain dehydrogenase/reductase (SDR) eriH, which leads to the production of cyathatriol. The acetyltransferase eriL converts cyathatriol into 11-O-acetyl-cyathatriol. The SDR eriH catalyzes further oxidation of 11-O-acetyl-cyathatriol into 1-O-acetylcyathin A3. Finally, the glycosyl transferase eriJ tranfers xylose from UDP-xylose onto C-14 of 11-O-acetyl-cyathatriol to form eracine Q. EriJ is also able to convert 11-O-acetyl-cyathatriol to eracine Q2 by using UDP-D-glucose as cosubstrate, but at a lower rate. In the absence of eriL and eriJ, the SDR eriH is able to convert cyathatriol to cyathin A3; this is likely a switching mechanism in the biosynthesis of cyathins (C-14 ketogroup)and erinacines (C-14 glycosylated group). The roles of the SDR eriB, the polyprenyl transferase eriF and the dehydrogenase eriK have still to be identified. The polypeptide is Geranylgeranyl pyrophosphate synthase AN1592 (Hericium erinaceus (Lion's mane mushroom)).